The primary structure comprises 70 residues: Protein SlyX homolog (70 aa).

Belongs to the SlyX family.

The sequence is that of Protein SlyX homolog from Shewanella putrefaciens (strain CN-32 / ATCC BAA-453).